A 130-amino-acid polypeptide reads, in one-letter code: Small ribosomal subunit protein uS8 (130 aa).

It belongs to the universal ribosomal protein uS8 family. As to quaternary structure, part of the 30S ribosomal subunit. Contacts proteins S5 and S12.

Its function is as follows. One of the primary rRNA binding proteins, it binds directly to 16S rRNA central domain where it helps coordinate assembly of the platform of the 30S subunit. The protein is Small ribosomal subunit protein uS8 of Pseudomonas syringae pv. tomato (strain ATCC BAA-871 / DC3000).